We begin with the raw amino-acid sequence, 658 residues long: Secretin XcpQ (658 aa).

The N-terminal stretch at 1–34 is a signal peptide; that stretch reads MSQPLLRALFAPSSRSYVPAVLLSLALGIQAAHA. The segment at 51 to 141 is N0; that stretch reads AHWTINLKDA…TEAGGGQSAP (91 aa). The tract at residues 142-205 is N1; that stretch reads DRLETRVIQV…DVIRQLDQKG (64 aa). The segment at 206–279 is N2; sequence SHDYSVINLR…SLDTPTARSA (74 aa). An N3 region spans residues 280-365; the sequence is NTRVIRLRHN…VPRAQVLVEA (86 aa). The interval 302-322 is disordered; sequence SEGMKNNGGQGGEQTGGGRPS. Gly residues predominate over residues 307-320; that stretch reads NNGGQGGEQTGGGR. The segment at 368-606 is secretin; it reads VEISGDIQDA…VFLRPTVVRD (239 aa). The interval 608–658 is s domain; that stretch reads AGLAALSGKKYSDIRVIDGTRGPEGRPSILPTNANQLFDGQAVDLRELMTE.

The protein belongs to the bacterial secretin family. GSP D subfamily. In terms of assembly, forms a cylindrical channel with 15 subunits. The closed pentadecameric channel is 170 Angstroms long and 140 Angstroms in diameter.

The protein localises to the cell outer membrane. In terms of biological role, involved in a type II secretion system (T2SS, formerly general secretion pathway, GSP) for the export of proteins. This subunit forms the outer membrane channel. Among its substrates are PrpL, elastase LasB, chitin binding protein D (CbpD), aminopeptidase PaAP, and metalloprotease ImpA. This is Secretin XcpQ from Pseudomonas aeruginosa (strain ATCC 15692 / DSM 22644 / CIP 104116 / JCM 14847 / LMG 12228 / 1C / PRS 101 / PAO1).